We begin with the raw amino-acid sequence, 103 residues long: MYAVIATGGKQYKVQEGDAIYVEKIAAEVDSTIELNEVLAVSKEDGLVLGKPVVEGAKVVAKVEAQGKSKKIIVFKYKRKKDYRRKRGHRQAYTKLVIEKIQA.

Belongs to the bacterial ribosomal protein bL21 family. As to quaternary structure, part of the 50S ribosomal subunit. Contacts protein L20.

Its function is as follows. This protein binds to 23S rRNA in the presence of protein L20. The sequence is that of Large ribosomal subunit protein bL21 from Clostridium acetobutylicum (strain ATCC 824 / DSM 792 / JCM 1419 / IAM 19013 / LMG 5710 / NBRC 13948 / NRRL B-527 / VKM B-1787 / 2291 / W).